Reading from the N-terminus, the 216-residue chain is Adenylate kinase (216 aa).

10-15 (GAGKGT) contacts ATP. The segment at 30–59 (STGDMLRAAVKAGTPLGLELKKVMDAGQLV) is NMP. AMP contacts are provided by residues T31, R36, 57–59 (QLV), 85–88 (GFPR), and Q92. The tract at residues 122–159 (GRRVHLASGRTYHIQYNPPKVEGKDDETGEDLIQRDDD) is LID. ATP is bound by residues R123 and 132-133 (TY). AMP-binding residues include R156 and R167. G202 is an ATP binding site.

Belongs to the adenylate kinase family. Monomer.

It is found in the cytoplasm. It carries out the reaction AMP + ATP = 2 ADP. The protein operates within purine metabolism; AMP biosynthesis via salvage pathway; AMP from ADP: step 1/1. Catalyzes the reversible transfer of the terminal phosphate group between ATP and AMP. Plays an important role in cellular energy homeostasis and in adenine nucleotide metabolism. The chain is Adenylate kinase from Pseudomonas putida (strain ATCC 700007 / DSM 6899 / JCM 31910 / BCRC 17059 / LMG 24140 / F1).